The sequence spans 245 residues: 1-(5-phosphoribosyl)-5-[(5-phosphoribosylamino)methylideneamino] imidazole-4-carboxamide isomerase (245 aa).

Aspartate 8 acts as the Proton acceptor in catalysis. The Proton donor role is filled by aspartate 129.

It belongs to the HisA/HisF family.

It is found in the cytoplasm. It carries out the reaction 1-(5-phospho-beta-D-ribosyl)-5-[(5-phospho-beta-D-ribosylamino)methylideneamino]imidazole-4-carboxamide = 5-[(5-phospho-1-deoxy-D-ribulos-1-ylimino)methylamino]-1-(5-phospho-beta-D-ribosyl)imidazole-4-carboxamide. It participates in amino-acid biosynthesis; L-histidine biosynthesis; L-histidine from 5-phospho-alpha-D-ribose 1-diphosphate: step 4/9. The polypeptide is 1-(5-phosphoribosyl)-5-[(5-phosphoribosylamino)methylideneamino] imidazole-4-carboxamide isomerase (Sinorhizobium fredii (strain NBRC 101917 / NGR234)).